We begin with the raw amino-acid sequence, 355 residues long: UDP-N-acetylglucosamine--N-acetylmuramyl-(pentapeptide) pyrophosphoryl-undecaprenol N-acetylglucosamine transferase (355 aa).

Residues 14-16 (SGG), Asn126, Arg162, Ser190, Ile243, 262-267 (ALTVSE), and Gln288 contribute to the UDP-N-acetyl-alpha-D-glucosamine site.

It belongs to the glycosyltransferase 28 family. MurG subfamily.

Its subcellular location is the cell inner membrane. It catalyses the reaction di-trans,octa-cis-undecaprenyl diphospho-N-acetyl-alpha-D-muramoyl-L-alanyl-D-glutamyl-meso-2,6-diaminopimeloyl-D-alanyl-D-alanine + UDP-N-acetyl-alpha-D-glucosamine = di-trans,octa-cis-undecaprenyl diphospho-[N-acetyl-alpha-D-glucosaminyl-(1-&gt;4)]-N-acetyl-alpha-D-muramoyl-L-alanyl-D-glutamyl-meso-2,6-diaminopimeloyl-D-alanyl-D-alanine + UDP + H(+). It participates in cell wall biogenesis; peptidoglycan biosynthesis. Functionally, cell wall formation. Catalyzes the transfer of a GlcNAc subunit on undecaprenyl-pyrophosphoryl-MurNAc-pentapeptide (lipid intermediate I) to form undecaprenyl-pyrophosphoryl-MurNAc-(pentapeptide)GlcNAc (lipid intermediate II). This is UDP-N-acetylglucosamine--N-acetylmuramyl-(pentapeptide) pyrophosphoryl-undecaprenol N-acetylglucosamine transferase from Blochmanniella pennsylvanica (strain BPEN).